Consider the following 211-residue polypeptide: Envelope glycoprotein (211 aa).

The Extracellular portion of the chain corresponds to 1 to 151; it reads QFKRRAKYKR…FNKSPWFTTL (151 aa). Residues 13-33 form a fusion peptide region; the sequence is VSLTLALLLGGLTMGGIAAGV. Coiled coils occupy residues 41 to 90 and 100 to 136; these read VATQ…LLFL and KEEC…SQQG. An immunosuppression region spans residues 79–95; the sequence is LQNRRGLDLLFLKEGGL. The CX6CC motif lies at 96–104; that stretch reads CAALKEECC. Residues 152–172 form a helical membrane-spanning segment; the sequence is ISTIMGPLIILLLILLFGPCI. Residue cysteine 171 is the site of S-palmitoyl cysteine; by host attachment. Residues 173-211 lie on the Cytoplasmic side of the membrane; the sequence is LNRLVQFIKDRISVVQALVLTQQYHQLKSIDPEKVESRE. The YXXL motif; contains endocytosis signal motif lies at 196–199; sequence YHQL.

The mature envelope protein (Env) consists of a trimer of SU-TM heterodimers attached by a labile interchain disulfide bond. Post-translationally, specific enzymatic cleavages in vivo yield mature proteins. Envelope glycoproteins are synthesized as an inactive precursor that is N-glycosylated and processed likely by host cell furin or by a furin-like protease in the Golgi to yield the mature SU and TM proteins. The cleavage site between SU and TM requires the minimal sequence [KR]-X-[KR]-R. The R-peptide is released from the C-terminus of the cytoplasmic tail of the TM protein upon particle formation as a result of proteolytic cleavage by the viral protease. Cleavage of this peptide is required for TM to become fusogenic. The CXXC motif is highly conserved across a broad range of retroviral envelope proteins. It is thought to participate in the formation of a labile disulfide bond possibly with the CX6CC motif present in the transmembrane protein. Isomerization of the intersubunit disulfide bond to an SU intrachain disulfide bond is thought to occur upon receptor recognition in order to allow membrane fusion. In terms of processing, the transmembrane protein is palmitoylated. Post-translationally, the R-peptide is palmitoylated.

The protein localises to the virion membrane. Its subcellular location is the host cell membrane. In terms of biological role, the surface protein (SU) attaches the virus to the host cell by binding to its receptor. This interaction triggers the refolding of the transmembrane protein (TM) and is thought to activate its fusogenic potential by unmasking its fusion peptide. Fusion occurs at the host cell plasma membrane. Functionally, the transmembrane protein (TM) acts as a class I viral fusion protein. Under the current model, the protein has at least 3 conformational states: pre-fusion native state, pre-hairpin intermediate state, and post-fusion hairpin state. During viral and target cell membrane fusion, the coiled coil regions (heptad repeats) assume a trimer-of-hairpins structure, positioning the fusion peptide in close proximity to the C-terminal region of the ectodomain. The formation of this structure appears to drive apposition and subsequent fusion of viral and target cell membranes. Membranes fusion leads to delivery of the nucleocapsid into the cytoplasm. This chain is Envelope glycoprotein (env), found in Mus musculus (Mouse).